The chain runs to 734 residues: DNA-binding protein RFX2 (734 aa).

Residues Met1–Gln23 show a composition bias toward polar residues. The interval Met1–Pro31 is disordered. The RFX-type winged-helix DNA-binding region spans His204 to Pro279. The segment at Asp694–Arg722 is disordered. A compositionally biased stretch (basic and acidic residues) spans Asp706–Arg722.

This sequence belongs to the RFX family. Homodimer. Heterodimer; heterodimerizes with other rfx proteins.

It localises to the nucleus. The protein localises to the cytoplasm. Transcription factor that acts as a key regulator of ciliogenesis. Specifically regulates expression of genes required for cilium assembly and function. Recognizes and binds the X-box, a regulatory motif with DNA sequence 5'-GTNRCC(0-3N)RGYAAC-3' present on promoters. The sequence is that of DNA-binding protein RFX2 (rfx2) from Danio rerio (Zebrafish).